A 356-amino-acid chain; its full sequence is tRNA N6-adenosine threonylcarbamoyltransferase (356 aa).

Fe cation is bound by residues His115 and His119. Substrate-binding positions include 138 to 142 (LVSGG), Asp171, Gly184, and Asn283. Asp311 serves as a coordination point for Fe cation.

This sequence belongs to the KAE1 / TsaD family. Fe(2+) serves as cofactor.

It localises to the cytoplasm. It carries out the reaction L-threonylcarbamoyladenylate + adenosine(37) in tRNA = N(6)-L-threonylcarbamoyladenosine(37) in tRNA + AMP + H(+). Functionally, required for the formation of a threonylcarbamoyl group on adenosine at position 37 (t(6)A37) in tRNAs that read codons beginning with adenine. Is involved in the transfer of the threonylcarbamoyl moiety of threonylcarbamoyl-AMP (TC-AMP) to the N6 group of A37, together with TsaE and TsaB. TsaD likely plays a direct catalytic role in this reaction. The protein is tRNA N6-adenosine threonylcarbamoyltransferase of Prochlorococcus marinus (strain SARG / CCMP1375 / SS120).